Consider the following 122-residue polypeptide: MIQVESRLEVADNSGAKKVQCIKVIGGSKRRYARVGDVIIVAVKAALPRGKVKKGEVARAVVVRTKKEISRPDGSLIRFDKNAAVLINKAGEPVGTRIFGPVTRELRARNYMKIISLAPEVL.

The protein belongs to the universal ribosomal protein uL14 family. In terms of assembly, part of the 50S ribosomal subunit. Forms a cluster with proteins L3 and L19. In the 70S ribosome, L14 and L19 interact and together make contacts with the 16S rRNA in bridges B5 and B8.

Binds to 23S rRNA. Forms part of two intersubunit bridges in the 70S ribosome. The protein is Large ribosomal subunit protein uL14 of Magnetococcus marinus (strain ATCC BAA-1437 / JCM 17883 / MC-1).